A 602-amino-acid polypeptide reads, in one-letter code: Elongation factor 4 (602 aa).

In terms of domain architecture, tr-type G spans 5–187 (DHIRNFAIIA…QIIVSLPAPE (183 aa)). Residues 17 to 22 (DHGKST) and 134 to 137 (NKVD) each bind GTP.

Belongs to the TRAFAC class translation factor GTPase superfamily. Classic translation factor GTPase family. LepA subfamily.

The protein resides in the cell inner membrane. The catalysed reaction is GTP + H2O = GDP + phosphate + H(+). Required for accurate and efficient protein synthesis under certain stress conditions. May act as a fidelity factor of the translation reaction, by catalyzing a one-codon backward translocation of tRNAs on improperly translocated ribosomes. Back-translocation proceeds from a post-translocation (POST) complex to a pre-translocation (PRE) complex, thus giving elongation factor G a second chance to translocate the tRNAs correctly. Binds to ribosomes in a GTP-dependent manner. In Pelagibacter ubique (strain HTCC1062), this protein is Elongation factor 4.